The following is a 125-amino-acid chain: Small ribosomal subunit protein uS13 (125 aa).

The protein belongs to the universal ribosomal protein uS13 family. As to quaternary structure, part of the 30S ribosomal subunit. Forms a loose heterodimer with protein S19. Forms two bridges to the 50S subunit in the 70S ribosome.

Located at the top of the head of the 30S subunit, it contacts several helices of the 16S rRNA. In the 70S ribosome it contacts the 23S rRNA (bridge B1a) and protein L5 of the 50S subunit (bridge B1b), connecting the 2 subunits; these bridges are implicated in subunit movement. Contacts the tRNAs in the A and P-sites. The chain is Small ribosomal subunit protein uS13 from Rickettsia rickettsii (strain Iowa).